Here is a 208-residue protein sequence, read N- to C-terminus: FMN-dependent NADH:quinone oxidoreductase 2 (208 aa).

It belongs to the azoreductase type 1 family. In terms of assembly, homodimer. FMN serves as cofactor.

It carries out the reaction 2 a quinone + NADH + H(+) = 2 a 1,4-benzosemiquinone + NAD(+). It catalyses the reaction N,N-dimethyl-1,4-phenylenediamine + anthranilate + 2 NAD(+) = 2-(4-dimethylaminophenyl)diazenylbenzoate + 2 NADH + 2 H(+). Quinone reductase that provides resistance to thiol-specific stress caused by electrophilic quinones. Its function is as follows. Also exhibits azoreductase activity. Catalyzes the reductive cleavage of the azo bond in aromatic azo compounds to the corresponding amines. The polypeptide is FMN-dependent NADH:quinone oxidoreductase 2 (Bacillus cereus (strain ATCC 10987 / NRS 248)).